A 499-amino-acid chain; its full sequence is Sialic acid-binding Ig-like lectin 8 (499 aa).

The N-terminal stretch at 1–16 is a signal peptide; that stretch reads MLLLLLLLPLLWGTKG. At 17-363 the chain is on the extracellular side; that stretch reads MEGDRQYGDG…RPVSQVTLAA (347 aa). A carbohydrate-binding positions include Tyr-23, 72 to 75, Arg-125, and 134 to 138; these read RPYQ and SYKSQ. Positions 40–123 constitute an Ig-like V-type domain; that stretch reads GLCVHVPCSF…ARKRDKGSYF (84 aa). Intrachain disulfides connect Cys-42/Cys-181, Cys-47/Cys-107, and Cys-175/Cys-224. Ig-like C2-type domains follow at residues 157 to 240 and 246 to 344; these read PDIL…STVR and PPWN…LSLS. An N-linked (GlcNAc...) asparagine glycan is attached at Asn-172. 2 N-linked (GlcNAc...) asparagine glycosylation sites follow: Asn-249 and Asn-267. Cys-283 and Cys-328 are oxidised to a cystine. A helical transmembrane segment spans residues 364–384; it reads VGGAGATALAFLSFCIIFIIV. Residues 385-499 lie on the Cytoplasmic side of the membrane; sequence RSCRKKSARP…HNPSSKEVRG (115 aa). The segment at 410–443 is disordered; sequence RGSASQGPLTESWKDGNPLKKPPPAVAPSSGEEG. Residues 445 to 450 carry the ITIM motif motif; sequence LHYATL. Disordered regions lie at residues 451–470 and 478–499; these read SFHKVKPQDPQGQEATDSEY and RETAETQACLRNHNPSSKEVRG. The SLAM-like motif signature appears at 468 to 473; that stretch reads SEYSEI.

It belongs to the immunoglobulin superfamily. SIGLEC (sialic acid binding Ig-like lectin) family. Expressed specifically on blood cells namely basophil, mast cells and eosinophils.

The protein resides in the membrane. Functionally, putative adhesion molecule that mediates sialic-acid dependent binding to blood cells. Preferentially binds to alpha-2,3-linked sialic acid. Also binds to alpha-2,6-linked sialic acid. The sialic acid recognition site may be masked by cis interactions with sialic acids on the same cell surface. Recognizes simultaneously epitopes having a terminal N-acetylneuraminic acid (sialic acid) and an underlying 6-O-sulfated galactose. Preferentially binds to Gal-6-sulfated sialyl-Lewis X glycan epitopes. The protein is Sialic acid-binding Ig-like lectin 8 (SIGLEC8) of Homo sapiens (Human).